The chain runs to 154 residues: Protein SprT-like (154 aa).

The region spanning 6–144 is the SprT-like domain; that stretch reads LQQLTETISL…CGTCHGKLKF (139 aa). A Zn(2+)-binding site is contributed by His67. Glu68 is an active-site residue. A Zn(2+)-binding site is contributed by His71.

This sequence belongs to the SprT family. It depends on Zn(2+) as a cofactor.

The protein localises to the cytoplasm. The protein is Protein SprT-like of Shouchella clausii (strain KSM-K16) (Alkalihalobacillus clausii).